The following is a 125-amino-acid chain: Cu-Zn superoxide dismutase-like protein (125 aa).

Cys-52 and Cys-102 are oxidised to a cystine.

Belongs to the Cu-Zn superoxide dismutase family.

The protein resides in the host cytoplasm. Its function is as follows. Virion protein with no enzymatic activity. The sequence is that of Cu-Zn superoxide dismutase-like protein from Bos taurus (Bovine).